The primary structure comprises 372 residues: Phenylalanine--tRNA ligase alpha subunit (372 aa).

E276 contacts Mg(2+).

Belongs to the class-II aminoacyl-tRNA synthetase family. Phe-tRNA synthetase alpha subunit type 1 subfamily. In terms of assembly, tetramer of two alpha and two beta subunits. It depends on Mg(2+) as a cofactor.

The protein localises to the cytoplasm. The enzyme catalyses tRNA(Phe) + L-phenylalanine + ATP = L-phenylalanyl-tRNA(Phe) + AMP + diphosphate + H(+). The chain is Phenylalanine--tRNA ligase alpha subunit from Thermobifida fusca (strain YX).